The sequence spans 316 residues: Cation efflux system protein CzcD (316 aa).

The next 6 membrane-spanning stretches (helical) occupy residues 17 to 37 (LKIA…GGVM), 47 to 67 (AAHM…IAIA), 82 to 102 (FEIL…IYIL), 115 to 135 (IEST…LISM), 152 to 172 (YLEV…AIII), and 174 to 194 (FTGW…WVLP).

The protein belongs to the cation diffusion facilitator (CDF) transporter (TC 2.A.4) family. SLC30A subfamily.

Its subcellular location is the cell membrane. Its function is as follows. Necessary for activation of the czc determinant. This is Cation efflux system protein CzcD (czcD) from Alcaligenes sp. (strain CT14).